Consider the following 268-residue polypeptide: Pantothenate synthetase (268 aa).

18–25 provides a ligand contact to ATP; that stretch reads MGYLHEGH. The active-site Proton donor is the H25. Q49 contributes to the (R)-pantoate binding site. Beta-alanine is bound at residue Q49. 135 to 138 is an ATP binding site; the sequence is GQKD. Q141 provides a ligand contact to (R)-pantoate. ATP-binding positions include V164 and 172 to 175; that span reads LSSR.

The protein belongs to the pantothenate synthetase family. Homodimer.

It localises to the cytoplasm. It carries out the reaction (R)-pantoate + beta-alanine + ATP = (R)-pantothenate + AMP + diphosphate + H(+). The protein operates within cofactor biosynthesis; (R)-pantothenate biosynthesis; (R)-pantothenate from (R)-pantoate and beta-alanine: step 1/1. In terms of biological role, catalyzes the condensation of pantoate with beta-alanine in an ATP-dependent reaction via a pantoyl-adenylate intermediate. In Dehalococcoides mccartyi (strain ATCC BAA-2266 / KCTC 15142 / 195) (Dehalococcoides ethenogenes (strain 195)), this protein is Pantothenate synthetase.